Reading from the N-terminus, the 376-residue chain is N-acetyldiaminopimelate deacetylase (376 aa).

The active site involves Asp69. The Proton acceptor role is filled by Glu128.

This sequence belongs to the peptidase M20A family. N-acetyldiaminopimelate deacetylase subfamily.

The enzyme catalyses N-acetyl-(2S,6S)-2,6-diaminopimelate + H2O = (2S,6S)-2,6-diaminopimelate + acetate. It participates in amino-acid biosynthesis; L-lysine biosynthesis via DAP pathway; LL-2,6-diaminopimelate from (S)-tetrahydrodipicolinate (acetylase route): step 3/3. In terms of biological role, catalyzes the conversion of N-acetyl-diaminopimelate to diaminopimelate and acetate. In Bacillus cereus (strain 03BB102), this protein is N-acetyldiaminopimelate deacetylase.